Reading from the N-terminus, the 48-residue chain is Sulfide dehydrogenase [flavocytochrome c] flavoprotein chain (48 aa).

40–46 (VTCPFSN) lines the FAD pocket.

Dimer of one cytochrome and one flavoprotein.

It localises to the periplasm. The catalysed reaction is hydrogen sulfide + 2 Fe(III)-[cytochrome c] = sulfur + 2 Fe(II)-[cytochrome c] + H(+). This Chlorobaculum thiosulfatiphilum (Chlorobium limicola f.sp. thiosulfatophilum) protein is Sulfide dehydrogenase [flavocytochrome c] flavoprotein chain.